Reading from the N-terminus, the 560-residue chain is Involucrin (560 aa).

Over residues 1 to 15 (MSQQHTLPVTLSPAL) the composition is skewed to polar residues. Disordered stretches follow at residues 1 to 131 (MSQQ…KLLD), 150 to 359 (EQLL…LVQQ), and 404 to 534 (GQLK…QSAL). The span at 76–91 (EQQQQEPQEQELQQQH) shows a compositional bias: low complexity. Composition is skewed to basic and acidic residues over residues 92–115 (WEQHEEYQKAENPEQQLKQEKAQR) and 159–172 (QEGHLKHLEQREGQ). The segment covering 189–211 (QKGQLELPEQQEGQLELPEQQEG) has biased composition (low complexity). Composition is skewed to basic and acidic residues over residues 212 to 231 (QLKHLEQQEGQLKHLEHQEG), 252 to 264 (QLKHLDQQEKQPE), and 274 to 320 (KHLE…EHQE). Residues 321-334 (GQLGLPEQQVQQLK) show a composition bias toward low complexity. 5 stretches are compositionally biased toward basic and acidic residues: residues 335–353 (QLEKEEGQPKHLEEEEGQL), 404–420 (GQLKHLEEQEGQLKHLE), 454–463 (QLKHLEKQEA), 476–486 (KHLEQQEKQLE), and 494–510 (QLKHLEQQEGQLKDLEQ).

The protein belongs to the involucrin family. Directly or indirectly cross-linked to cornifelin (CNFN). Substrate of transglutaminase. Specific glutamines or lysines are cross-linked to keratins, desmoplakin and to inter involucrin molecules. Keratinocytes of epidermis and other stratified squamous epithelia.

It localises to the cytoplasm. Functionally, part of the insoluble cornified cell envelope (CE) of stratified squamous epithelia. The polypeptide is Involucrin (IVL) (Pan paniscus (Pygmy chimpanzee)).